Reading from the N-terminus, the 177-residue chain is MDTPDSASRVFCGRFLSMVNTDDVNAIILAQKNMLDRFEKTNEMLLNFNNLSSVRLQQMSERFMHHTRTLVDMKRDLDSIFRRIRTLKGKLARQHPEAFSHIPEGSLLEDEDEDPVPPSITTTIATSEQSTGSCDTSPDTASPSFSPGFEDLSHIRPGSPAINGHSQTDDEEETREE.

The residue at position 1 (Met-1) is an N-acetylmethionine. Positions 92–177 (ARQHPEAFSH…TDDEEETREE (86 aa)) are disordered. Residues 119–145 (SITTTIATSEQSTGSCDTSPDTASPSF) are compositionally biased toward polar residues.

This sequence belongs to the KXD1 family. Component of the BLOC-one-related complex (BORC) which is composed of BLOC1S1, BLOC1S2, BORCS5, BORCS6, BORCS7, BORCS8, KXD1 and SNAPIN. Associates with the BLOC-1 complex. Interacts with BLOC1S1. Interacts with DTNBP1/BLOC1S7 (via coiled-coil domain).

Its subcellular location is the lysosome membrane. In terms of biological role, as part of the BORC complex may play a role in lysosomes movement and localization at the cell periphery. Associated with the cytosolic face of lysosomes, the BORC complex may recruit ARL8B and couple lysosomes to microtubule plus-end-directed kinesin motor. May also be involved in the biogenesis of lysosome-related organelles such as melanosomes. This is KxDL motif-containing protein 1 (Kxd1) from Rattus norvegicus (Rat).